The primary structure comprises 237 residues: tRNA (guanine-N(1)-)-methyltransferase (237 aa).

S-adenosyl-L-methionine is bound by residues glycine 112 and 132–137 (IGDFVL).

It belongs to the RNA methyltransferase TrmD family. Homodimer.

It is found in the cytoplasm. It catalyses the reaction guanosine(37) in tRNA + S-adenosyl-L-methionine = N(1)-methylguanosine(37) in tRNA + S-adenosyl-L-homocysteine + H(+). In terms of biological role, specifically methylates guanosine-37 in various tRNAs. This Thermosynechococcus vestitus (strain NIES-2133 / IAM M-273 / BP-1) protein is tRNA (guanine-N(1)-)-methyltransferase.